A 111-amino-acid polypeptide reads, in one-letter code: uncharacterized protein (111 aa).

It localises to the cytoplasm. The protein localises to the nucleus. This is an uncharacterized protein from Schizosaccharomyces pombe (strain 972 / ATCC 24843) (Fission yeast).